The primary structure comprises 263 residues: MLVIVLQGLAGFLSIIAILCQKRYNKLHRSIYGLSYDLFLLDFVGNGLYLYCALHYCYSSLVREQLSQRFPLFYPLNDARSIPISSFLILKDFCVSCCCMMVLRQLYYYRSTKHIYQGISITSIIIISVFLVLGIFTYGCSISNLPLKNSGKFGVFYLEHINYLWVMANLLKCFKYVPQMSINWMGCSTVGLSSKFALISFLAESIDLLGRLVIPTNALFYEIPFNSTPFWVKLIQFVTLLVILCQVQYVYVGRKPRLPKGKL.

7 consecutive transmembrane segments (helical) span residues 1-21 (MLVIVLQGLAGFLSIIAILCQ), 38-58 (LFLLDFVGNGLYLYCALHYCY), 82-102 (IPISSFLILKDFCVSCCCMMV), 118-138 (GISITSIIIISVFLVLGIFTY), 151-171 (GKFGVFYLEHINYLWVMANLL), 196-216 (FALISFLAESIDLLGRLVIPT), and 230-250 (FWVKLIQFVTLLVILCQVQYV).

The protein localises to the membrane. This is an uncharacterized protein from Saccharomyces cerevisiae (strain ATCC 204508 / S288c) (Baker's yeast).